The chain runs to 299 residues: Bifunctional protein FolD (299 aa).

Residues G168–S170, S193, and I234 each bind NADP(+).

This sequence belongs to the tetrahydrofolate dehydrogenase/cyclohydrolase family. In terms of assembly, homodimer.

The catalysed reaction is (6R)-5,10-methylene-5,6,7,8-tetrahydrofolate + NADP(+) = (6R)-5,10-methenyltetrahydrofolate + NADPH. The enzyme catalyses (6R)-5,10-methenyltetrahydrofolate + H2O = (6R)-10-formyltetrahydrofolate + H(+). Its pathway is one-carbon metabolism; tetrahydrofolate interconversion. Functionally, catalyzes the oxidation of 5,10-methylenetetrahydrofolate to 5,10-methenyltetrahydrofolate and then the hydrolysis of 5,10-methenyltetrahydrofolate to 10-formyltetrahydrofolate. In Bartonella tribocorum (strain CIP 105476 / IBS 506), this protein is Bifunctional protein FolD.